The primary structure comprises 372 residues: Peptide chain release factor 1 (372 aa).

Residue glutamine 237 is modified to N5-methylglutamine.

The protein belongs to the prokaryotic/mitochondrial release factor family. Post-translationally, methylated by PrmC. Methylation increases the termination efficiency of RF1.

The protein resides in the cytoplasm. Functionally, peptide chain release factor 1 directs the termination of translation in response to the peptide chain termination codons UAG and UAA. This is Peptide chain release factor 1 from Anaeromyxobacter sp. (strain Fw109-5).